The chain runs to 385 residues: MYSTELGINFFGNESNKKRQLNKIEILKKNIKNLKIFLIIAGTNTSQIPGISAAGINPKSRRTTALADAEFLLEGASKGHKYKLPLLNAGVTPALISHVCSKLINAYPVIVPLGIGVKPYFNHLVVEDRNLGPSNCLTTGKSMTKERVLNLYEKGLAIGKSLKQPVLISESVPGGTTTAQAVMEAFGLQVSNLVGSSLFKAPRELRRQVIKRGLLNAHFKADSDSFDVVAAVGDPFQAFSMGLLIGARLAKQPVILSGGSQMLAVILLVLEFLGEKNKDEFIEDVFIATTGWLVKDNSLNDLVNLINEKYDVKLLGLASPLNFKSSKYKELKDYELGHVKEGVGAGGISLLAFLDGFKNEEIVSLCQQNLEMMKGLGQISLEKDC.

Belongs to the UPF0284 family.

The polypeptide is UPF0284 protein P9301_04631 (Prochlorococcus marinus (strain MIT 9301)).